A 299-amino-acid chain; its full sequence is Meso-diaminopimelate D-dehydrogenase (299 aa).

NADP(+) contacts are provided by residues 11–14 (YGNI), R36, 67–70 (CTPT), 90–92 (SFD), and 119–123 (AGWDP). Residues D92, D122, F146, 152 to 153 (MG), T171, R181, H227, and N253 each bind substrate.

It belongs to the diaminopimelate dehydrogenase family. In terms of assembly, homodimer.

The enzyme catalyses meso-2,6-diaminopimelate + NADP(+) + H2O = (S)-2-amino-6-oxoheptanedioate + NH4(+) + NADPH + H(+). Its pathway is amino-acid biosynthesis; L-lysine biosynthesis via DAP pathway; DL-2,6-diaminopimelate from (S)-tetrahydrodipicolinate: step 1/1. Catalyzes the reversible NADPH-dependent reductive amination of L-2-amino-6-oxopimelate, the acyclic form of L-tetrahydrodipicolinate, to generate the meso compound, D,L-2,6-diaminopimelate. Probably plays a role in lysine biosynthesis. Exhibits a high substrate specificity for meso-2,6-diaminopimelate (m-DAP), since the activity with L,L-2,6-diaminopimelate is less than 5% of the activity observed with m-DAP. Can use NAD(+) only very poorly since the activity observed in the presence of NAD(+) is about 14% of that with NADP(+). The polypeptide is Meso-diaminopimelate D-dehydrogenase (ddh) (Bacteroides fragilis (strain ATCC 25285 / DSM 2151 / CCUG 4856 / JCM 11019 / LMG 10263 / NCTC 9343 / Onslow / VPI 2553 / EN-2)).